Here is a 709-residue protein sequence, read N- to C-terminus: Polyribonucleotide nucleotidyltransferase (709 aa).

Aspartate 490 and aspartate 496 together coordinate Mg(2+). Residues 557-616 (PKVITMRVLPEKIPVIIGPSGKNIKKIIDETGVKIDLDQEGLVRIYAVDGESADKAKEMI) form the KH domain. Residues 626–694 (GEVYMGKVTR…EMGRAKVSLK (69 aa)) form the S1 motif domain.

It belongs to the polyribonucleotide nucleotidyltransferase family. The cofactor is Mg(2+).

The protein localises to the cytoplasm. It catalyses the reaction RNA(n+1) + phosphate = RNA(n) + a ribonucleoside 5'-diphosphate. Involved in mRNA degradation. Catalyzes the phosphorolysis of single-stranded polyribonucleotides processively in the 3'- to 5'-direction. This is Polyribonucleotide nucleotidyltransferase from Persephonella marina (strain DSM 14350 / EX-H1).